A 209-amino-acid chain; its full sequence is 2-phospho-L-lactate guanylyltransferase (209 aa).

This sequence belongs to the CofC family. In terms of assembly, homodimer.

The enzyme catalyses (2S)-2-phospholactate + GTP + H(+) = (2S)-lactyl-2-diphospho-5'-guanosine + diphosphate. It participates in cofactor biosynthesis; coenzyme F420 biosynthesis. Its function is as follows. Guanylyltransferase that catalyzes the activation of (2S)-2-phospholactate (2-PL) as (2S)-lactyl-2-diphospho-5'-guanosine, via the condensation of 2-PL with GTP. It is involved in the biosynthesis of coenzyme F420, a hydride carrier cofactor. This chain is 2-phospho-L-lactate guanylyltransferase, found in Methanosphaerula palustris (strain ATCC BAA-1556 / DSM 19958 / E1-9c).